The primary structure comprises 900 residues: MNWTTDKVRQTWLDYFAKKDHLVLASKSLIPINDPSLLWINSGVATLKDYFSARKTPPSKRLVNAQICLRVNDIENVGFTSRHQTLFEMLGNFSIGDYFKTEAIDFAFDLLVNYYQLDPKRFYITVYEDDETTYKRWIKHKIDKNHIIKCDKSRNFWDLGLGPCGPCTEIYYDRGEKFDPKKIGEKLFFEDIENDRYVEIWNIVFSQFNNDGNGNYTELAQKNIDTGAGIERLVSVLQNSPTNFDTDIFLKLIKIIEAFCPFKYDPNSYFTFDPQKVKEQSYFRIIADHFKAITFTISEGVLPGPNERNYVVRRLLRRALIACKKLQLNLAFIEKIIDEIIASYENYYQHLKAKNETVKQVVLKEINAFNKTIDLGLVLFEKSVKNNTLTPQLTFQLNETYGFPVEIIRELVNQKGLTIDWTVFDQLMAKHRSISKQNNQTINFEKQNINLVNFKTKSTFFYHKNKINAKVIGLFDENYLPVKELNNQSGYVVFDQTVLYATSGGQRYDEGSCINHSNNNDQKISFQGVFKGPNKQHFHYFLVGSFKLNDQVTLSHDETWRKLAANNHSLEHLLHAALQKEIDPLIKQSGAFKSAQKATIDFNLNRHLTRNELEKVENKIRSLIKQKISSKEIFTDFEGSQKLNAIAYFEEEYSQHEILRVIRFGDYSVELCGGTHVANTASIEDCFITDFYSLGAGRWRIEIISSNETINNYLKAENQKLIQLKSELEKVLSLIDSSIFKVELKELQQRLDKFILPEKITQLRDASDTLLALKNDINQLKTKNYKVSQQALALSIKKQLLSLVDENKSYVIATFNDVEPKLLLQTLHDVFNQNQTKNFLIINQFNESNSFIVIGNKTTTIIEKLRNSFNLKGGGNDKLFRGSFQDNVTPQKLNELFQNK.

Histidine 568, histidine 572, cysteine 672, and histidine 676 together coordinate Zn(2+).

The protein belongs to the class-II aminoacyl-tRNA synthetase family. The cofactor is Zn(2+).

The protein resides in the cytoplasm. The enzyme catalyses tRNA(Ala) + L-alanine + ATP = L-alanyl-tRNA(Ala) + AMP + diphosphate. Catalyzes the attachment of alanine to tRNA(Ala) in a two-step reaction: alanine is first activated by ATP to form Ala-AMP and then transferred to the acceptor end of tRNA(Ala). Also edits incorrectly charged Ser-tRNA(Ala) and Gly-tRNA(Ala) via its editing domain. The protein is Alanine--tRNA ligase of Mycoplasma genitalium (strain ATCC 33530 / DSM 19775 / NCTC 10195 / G37) (Mycoplasmoides genitalium).